Consider the following 270-residue polypeptide: 4-hydroxy-tetrahydrodipicolinate reductase (270 aa).

NAD(+)-binding positions include 9–14 and Glu35; that span reads GAGGRM. Arg36 provides a ligand contact to NADP(+). Residues 99–101 and 123–126 each bind NAD(+); these read GTT and ASNY. Catalysis depends on His156, which acts as the Proton donor/acceptor. His157 is a (S)-2,3,4,5-tetrahydrodipicolinate binding site. The active-site Proton donor is the Lys160. Residue 166 to 167 participates in (S)-2,3,4,5-tetrahydrodipicolinate binding; that stretch reads GT.

It belongs to the DapB family.

The protein resides in the cytoplasm. The catalysed reaction is (S)-2,3,4,5-tetrahydrodipicolinate + NAD(+) + H2O = (2S,4S)-4-hydroxy-2,3,4,5-tetrahydrodipicolinate + NADH + H(+). It carries out the reaction (S)-2,3,4,5-tetrahydrodipicolinate + NADP(+) + H2O = (2S,4S)-4-hydroxy-2,3,4,5-tetrahydrodipicolinate + NADPH + H(+). It participates in amino-acid biosynthesis; L-lysine biosynthesis via DAP pathway; (S)-tetrahydrodipicolinate from L-aspartate: step 4/4. Functionally, catalyzes the conversion of 4-hydroxy-tetrahydrodipicolinate (HTPA) to tetrahydrodipicolinate. The polypeptide is 4-hydroxy-tetrahydrodipicolinate reductase (Histophilus somni (strain 129Pt) (Haemophilus somnus)).